Here is a 559-residue protein sequence, read N- to C-terminus: Arginine--tRNA ligase (559 aa).

The short motif at 116-126 (ANPNGPLHVGH) is the 'HIGH' region element.

The protein belongs to the class-I aminoacyl-tRNA synthetase family.

It localises to the cytoplasm. The enzyme catalyses tRNA(Arg) + L-arginine + ATP = L-arginyl-tRNA(Arg) + AMP + diphosphate. This chain is Arginine--tRNA ligase, found in Methanosphaerula palustris (strain ATCC BAA-1556 / DSM 19958 / E1-9c).